A 285-amino-acid polypeptide reads, in one-letter code: 2-dehydro-3-deoxyphosphooctonate aldolase (285 aa).

The protein belongs to the KdsA family.

The protein localises to the cytoplasm. The catalysed reaction is D-arabinose 5-phosphate + phosphoenolpyruvate + H2O = 3-deoxy-alpha-D-manno-2-octulosonate-8-phosphate + phosphate. It participates in carbohydrate biosynthesis; 3-deoxy-D-manno-octulosonate biosynthesis; 3-deoxy-D-manno-octulosonate from D-ribulose 5-phosphate: step 2/3. It functions in the pathway bacterial outer membrane biogenesis; lipopolysaccharide biosynthesis. This Acidovorax ebreus (strain TPSY) (Diaphorobacter sp. (strain TPSY)) protein is 2-dehydro-3-deoxyphosphooctonate aldolase.